Reading from the N-terminus, the 1186-residue chain is Tricalbin-1 (1186 aa).

Positions 1–50 (MAKEDTGVTAPKKPETAQVANINGIDKLEPPKTKEETESSKSVSSEKAAH) are disordered. At 1–106 (MAKEDTGVTA…NIIPDSLYGD (106 aa)) the chain is on the cytoplasmic side. The span at 26–39 (DKLEPPKTKEETES) shows a compositional bias: basic and acidic residues. Residues 107–127 (WYHSVAIFFIGGVASFALGHY) traverse the membrane as a helical segment. Position 128 (K128) is a topological domain, extracellular. A helical membrane pass occupies residues 129-149 (FSMGSAFFVIVITSLLYRTSA). The Cytoplasmic segment spans residues 150–1186 (KKYRGSIREL…HEMGEEETKF (1037 aa)). An SMP-LTD domain is found at 172–375 (DYESLEWLNA…PPFSLQLNIP (204 aa)). 3 consecutive C2 domains span residues 366–487 (PPFS…RNLK), 512–636 (EKKL…IKIT), and 640–757 (RPVR…DKYE). The stretch at 795 to 822 (LEEIQDLDKVNKKKKALELRKSAIDEKK) forms a coiled coil. One can recognise a C2 4 domain in the interval 976–1094 (PIDTKQLPAN…KVEGTTELDV (119 aa)). S1000 bears the Phosphoserine mark. D1008, D1014, D1064, D1066, S1069, and D1072 together coordinate Ca(2+).

Belongs to the tricalbin family. As to quaternary structure, interacts with TCB2 via its C-terminal domain. The cofactor is Ca(2+).

The protein localises to the cell membrane. The protein resides in the endoplasmic reticulum membrane. In terms of biological role, may play a role in membrane trafficking. The polypeptide is Tricalbin-1 (TCB1) (Saccharomyces cerevisiae (strain ATCC 204508 / S288c) (Baker's yeast)).